The following is a 155-amino-acid chain: Interleukin-2 (155 aa).

An N-terminal signal peptide occupies residues 1-20 (MYKMQLLSCIALTLVLVANS). A glycan (O-linked (GalNAc...) threonine) is linked at Thr-23. Cys-79 and Cys-127 form a disulfide bridge.

This sequence belongs to the IL-2 family.

The protein localises to the secreted. Its function is as follows. Cytokine produced by activated CD4-positive helper T-cells and to a lesser extend activated CD8-positive T-cells and natural killer (NK) cells that plays pivotal roles in the immune response and tolerance. Binds to a receptor complex composed of either the high-affinity trimeric IL-2R (IL2RA/CD25, IL2RB/CD122 and IL2RG/CD132) or the low-affinity dimeric IL-2R (IL2RB and IL2RG). Interaction with the receptor leads to oligomerization and conformation changes in the IL-2R subunits resulting in downstream signaling starting with phosphorylation of JAK1 and JAK3. In turn, JAK1 and JAK3 phosphorylate the receptor to form a docking site leading to the phosphorylation of several substrates including STAT5. This process leads to activation of several pathways including STAT, phosphoinositide-3-kinase/PI3K and mitogen-activated protein kinase/MAPK pathways. Functions as a T-cell growth factor and can increase NK-cell cytolytic activity as well. Promotes strong proliferation of activated B-cells and subsequently immunoglobulin production. Plays a pivotal role in regulating the adaptive immune system by controlling the survival and proliferation of regulatory T-cells, which are required for the maintenance of immune tolerance. Moreover, participates in the differentiation and homeostasis of effector T-cell subsets, including Th1, Th2, Th17 as well as memory CD8-positive T-cells. In Halichoerus grypus (Gray seal), this protein is Interleukin-2 (IL2).